We begin with the raw amino-acid sequence, 260 residues long: Cytochrome c oxidase subunit 2 (260 aa).

Topologically, residues 1-43 (MILRLLECRFFTIALCDAAEPWQLGFQDAATPMMQGIIDLHHD) are mitochondrial intermembrane. A helical membrane pass occupies residues 44–64 (IFFFLILILVFVLWMLVRALW). Topologically, residues 65–84 (HFNEQTNPIPQRIVHGTTIE) are mitochondrial matrix. A helical membrane pass occupies residues 85 to 105 (IIWTIFPSVILLFIAIPSFAL). Residues 106-260 (LYSMDGVLVD…VSNQLILQTN (155 aa)) lie on the Mitochondrial intermembrane side of the membrane. Cu cation contacts are provided by His-189, Cys-224, Glu-226, Cys-228, His-232, and Met-235. Position 226 (Glu-226) interacts with Mg(2+).

Belongs to the cytochrome c oxidase subunit 2 family. In terms of assembly, component of the cytochrome c oxidase (complex IV, CIV), a multisubunit enzyme composed of a catalytic core of 3 subunits and several supernumerary subunits. The complex exists as a monomer or a dimer and forms supercomplexes (SCs) in the inner mitochondrial membrane with ubiquinol-cytochrome c oxidoreductase (cytochrome b-c1 complex, complex III, CIII). Cu cation serves as cofactor.

The protein resides in the mitochondrion inner membrane. It carries out the reaction 4 Fe(II)-[cytochrome c] + O2 + 8 H(+)(in) = 4 Fe(III)-[cytochrome c] + 2 H2O + 4 H(+)(out). Functionally, component of the cytochrome c oxidase, the last enzyme in the mitochondrial electron transport chain which drives oxidative phosphorylation. The respiratory chain contains 3 multisubunit complexes succinate dehydrogenase (complex II, CII), ubiquinol-cytochrome c oxidoreductase (cytochrome b-c1 complex, complex III, CIII) and cytochrome c oxidase (complex IV, CIV), that cooperate to transfer electrons derived from NADH and succinate to molecular oxygen, creating an electrochemical gradient over the inner membrane that drives transmembrane transport and the ATP synthase. Cytochrome c oxidase is the component of the respiratory chain that catalyzes the reduction of oxygen to water. Electrons originating from reduced cytochrome c in the intermembrane space (IMS) are transferred via the dinuclear copper A center (CU(A)) of subunit 2 and heme A of subunit 1 to the active site in subunit 1, a binuclear center (BNC) formed by heme A3 and copper B (CU(B)). The BNC reduces molecular oxygen to 2 water molecules using 4 electrons from cytochrome c in the IMS and 4 protons from the mitochondrial matrix. The sequence is that of Cytochrome c oxidase subunit 2 (COX2) from Zea mays (Maize).